The following is an 87-amino-acid chain: Phosphoribosyl-ATP pyrophosphatase (87 aa).

The protein belongs to the PRA-PH family.

The protein localises to the cytoplasm. It catalyses the reaction 1-(5-phospho-beta-D-ribosyl)-ATP + H2O = 1-(5-phospho-beta-D-ribosyl)-5'-AMP + diphosphate + H(+). Its pathway is amino-acid biosynthesis; L-histidine biosynthesis; L-histidine from 5-phospho-alpha-D-ribose 1-diphosphate: step 2/9. The polypeptide is Phosphoribosyl-ATP pyrophosphatase (Clavibacter sepedonicus (Clavibacter michiganensis subsp. sepedonicus)).